A 444-amino-acid polypeptide reads, in one-letter code: Putative methylesterase 15, chloroplastic (444 aa).

Positions methionine 1 to serine 27 are enriched in polar residues. Disordered regions lie at residues methionine 1 to serine 36 and proline 48 to isoleucine 91. A chloroplast-targeting transit peptide spans methionine 1–serine 58. The segment covering serine 53–lysine 63 has biased composition (low complexity). Basic residues predominate over residues glycine 64–glutamine 80. Basic and acidic residues predominate over residues histidine 81 to leucine 90. Residues phenylalanine 188–glutamate 312 form the AB hydrolase-1 domain. The Acyl-ester intermediate role is filled by aspartate 262. Catalysis depends on charge relay system residues aspartate 390 and histidine 418.

The protein belongs to the AB hydrolase superfamily. Methylesterase family.

Its subcellular location is the plastid. It is found in the chloroplast. Its function is as follows. Putative methylesterase. The protein is Putative methylesterase 15, chloroplastic of Arabidopsis thaliana (Mouse-ear cress).